An 821-amino-acid chain; its full sequence is Condensin-2 complex subunit kle-2 (821 aa).

Residues 389-426 (VMQNDEPNTSRRPDENYAPMDFDDDFGGGGDDDDDDYI) form a disordered region. The segment covering 409-424 (DFDDDFGGGGDDDDDD) has biased composition (acidic residues). Residues 529–561 (TAILAEKKRRIKEKTAKIREARIQNMQRKRTAR) are a coiled coil.

The protein belongs to the CND2 H2 (condensin-2 subunit 2) family. In terms of assembly, component of the condensin II complex, which contains the mix-1/SMC2 and smc-4/SMC4 heterodimer, and three non SMC subunits, capg-2, kle-2 and hcp-6 that probably regulate the complex. Within the complex, interacts with mix-1, smc-4, capg-2 and hcp-6.

It is found in the nucleus. The protein localises to the chromosome. It localises to the centromere. Its function is as follows. Regulatory subunit of the condensin II complex, a complex that seems to play a role in prophase chromosome condensation and in chromosome segregation in mitosis and in meiosis. In Caenorhabditis elegans, this protein is Condensin-2 complex subunit kle-2 (kle-2).